Here is a 1383-residue protein sequence, read N- to C-terminus: Spike glycoprotein (1383 aa).

The first 25 residues, 1-25 (MRSLIYFWLLLPVLPTLSLPQDVTR), serve as a signal peptide directing secretion. The segment at 26–734 (CQSTTNFRRF…TRELPGFFYH (709 aa)) is S1. At 26-1324 (CQSTTNFRRF…NRVETYIKWP (1299 aa)) the chain is on the virion surface side. Residues 617 to 745 (FQFTKGELIT…NDGSNCTEPV (129 aa)) form an interaction with host ANPEP region. Residues 735–1383 (SNDGSNCTEP…YEAFEKVHVQ (649 aa)) form an S2 region. The fusion peptide stretch occupies residues 955-975 (IGGMALGGITAAAALPFSYAV). Positions 969–1088 (LPFSYAVQAR…QVDRLITGRL (120 aa)) are heptad repeat 1 (HR1). Coiled coils occupy residues 1036 to 1080 (QEVV…DVQV) and 1272 to 1314 (TYLN…LEWL). The tract at residues 1240 to 1336 (PDYIDVNKTL…VWLIIVIVLI (97 aa)) is heptad repeat 2 (HR2). A helical transmembrane segment spans residues 1325–1344 (WWVWLIIVIVLIFVVSLLVF). Over 1345–1383 (CCISTGCCGCCGCCGACFSGCCRGPRLQPYEAFEKVHVQ) the chain is Intravirion. Residues 1379–1383 (KVHVQ) carry the KxHxx motif.

The protein belongs to the alphacoronaviruses spike protein family. In terms of assembly, homotrimer. During virus morphogenesis, found in a complex with M and HE proteins. Interacts with host ANPEP.

It localises to the virion membrane. The protein resides in the host endoplasmic reticulum-Golgi intermediate compartment membrane. Its function is as follows. S1 region attaches the virion to the cell membrane by interacting with host ANPEP/aminopeptidase N, initiating the infection. Binding to the receptor probably induces conformational changes in the S glycoprotein unmasking the fusion peptide of S2 region and activating membranes fusion. S2 region belongs to the class I viral fusion protein. Under the current model, the protein has at least 3 conformational states: pre-fusion native state, pre-hairpin intermediate state, and post-fusion hairpin state. During viral and target cell membrane fusion, the coiled coil regions (heptad repeats) regions assume a trimer-of-hairpins structure, positioning the fusion peptide in close proximity to the C-terminal region of the ectodomain. The formation of this structure appears to drive apposition and subsequent fusion of viral and target cell membranes. The sequence is that of Spike glycoprotein from Porcine epidemic diarrhea virus (strain CV777) (PEDV).